The primary structure comprises 218 residues: Ras-related protein R-Ras (218 aa).

The tract at residues 1 to 30 (MSSGAASGTGRGRPRGGGPGPRDPPPGETH) is disordered. The segment covering 7–20 (SGTGRGRPRGGGPG) has biased composition (gly residues). 36 to 44 (GGGGVGKSA) is a binding site for GTP. The short motif at 58 to 66 (YDPTIEDSY) is the Effector region element. GTP contacts are provided by residues 83–87 (DTAGQ), 142–145 (NKAD), and 172–174 (SAK). Cysteine methyl ester is present on Cys215. Cys215 carries S-geranylgeranyl cysteine lipidation. Residues 216-218 (VLL) constitute a propeptide, removed in mature form.

Belongs to the small GTPase superfamily. Ras family. As to quaternary structure, interacts with PLCE1. Interacts (active GTP-bound form preferentially) with RGS14. Interacts with OSBPL3. Interacts with ZDHHC19. In terms of processing, S-palmitoylated by ZDHHC19, leading to increased association with membranes and with rafts/caveolae as well as enhanced cell viability.

It localises to the cell membrane. The catalysed reaction is GTP + H2O = GDP + phosphate + H(+). GTP-binding protein with GTPase activity, likely involved in the regulation of MAPK signaling pathway and thereby controlling multiple cellular processes. Regulates the organization of the actin cytoskeleton. With OSPBL3, modulates integrin beta-1 (ITGB1) activity. This is Ras-related protein R-Ras (Rras) from Rattus norvegicus (Rat).